Here is a 156-residue protein sequence, read N- to C-terminus: Small ribosomal subunit protein uS7 (156 aa).

Belongs to the universal ribosomal protein uS7 family. In terms of assembly, part of the 30S ribosomal subunit. Contacts proteins S9 and S11.

Its function is as follows. One of the primary rRNA binding proteins, it binds directly to 16S rRNA where it nucleates assembly of the head domain of the 30S subunit. Is located at the subunit interface close to the decoding center, probably blocks exit of the E-site tRNA. The protein is Small ribosomal subunit protein uS7 of Campylobacter hominis (strain ATCC BAA-381 / DSM 21671 / CCUG 45161 / LMG 19568 / NCTC 13146 / CH001A).